Here is a 293-residue protein sequence, read N- to C-terminus: NAD kinase (293 aa).

Asp-74 functions as the Proton acceptor in the catalytic mechanism. Residues 74 to 75 (DG), Arg-79, 148 to 149 (NE), Arg-176, Asp-178, 189 to 194 (TAYALS), and Gln-248 each bind NAD(+).

Belongs to the NAD kinase family. Requires a divalent metal cation as cofactor.

Its subcellular location is the cytoplasm. It catalyses the reaction NAD(+) + ATP = ADP + NADP(+) + H(+). In terms of biological role, involved in the regulation of the intracellular balance of NAD and NADP, and is a key enzyme in the biosynthesis of NADP. Catalyzes specifically the phosphorylation on 2'-hydroxyl of the adenosine moiety of NAD to yield NADP. This chain is NAD kinase, found in Blochmanniella floridana.